We begin with the raw amino-acid sequence, 395 residues long: Elongation factor Tu (395 aa).

One can recognise a tr-type G domain in the interval Lys-10–Glu-204. Positions Gly-19–Thr-26 are G1. A GTP-binding site is contributed by Gly-19 to Thr-26. Thr-26 serves as a coordination point for Mg(2+). The G2 stretch occupies residues Gly-60–Ser-64. The interval Asp-81–Gly-84 is G3. Residues Asp-81–His-85 and Asn-136–Asp-139 contribute to the GTP site. The tract at residues Asn-136–Asp-139 is G4. Residues Ser-174–Leu-176 are G5.

Belongs to the TRAFAC class translation factor GTPase superfamily. Classic translation factor GTPase family. EF-Tu/EF-1A subfamily. Monomer.

It localises to the cytoplasm. It carries out the reaction GTP + H2O = GDP + phosphate + H(+). Its function is as follows. GTP hydrolase that promotes the GTP-dependent binding of aminoacyl-tRNA to the A-site of ribosomes during protein biosynthesis. In Oceanobacillus iheyensis (strain DSM 14371 / CIP 107618 / JCM 11309 / KCTC 3954 / HTE831), this protein is Elongation factor Tu.